Consider the following 482-residue polypeptide: Adenylosuccinate lyase (482 aa).

Residues 14-15 (RY), 82-84 (RHD), and 108-109 (TS) each bind substrate. Histidine 156 acts as the Proton donor/acceptor in catalysis. Glutamine 238 lines the substrate pocket. The active-site Proton donor/acceptor is the serine 286. Substrate-binding residues include arginine 300, arginine 326, serine 331, and arginine 335.

Belongs to the lyase 1 family. Adenylosuccinate lyase subfamily. As to quaternary structure, homotetramer. Residues from neighboring subunits contribute catalytic and substrate-binding residues to each active site.

The enzyme catalyses N(6)-(1,2-dicarboxyethyl)-AMP = fumarate + AMP. It catalyses the reaction (2S)-2-[5-amino-1-(5-phospho-beta-D-ribosyl)imidazole-4-carboxamido]succinate = 5-amino-1-(5-phospho-beta-D-ribosyl)imidazole-4-carboxamide + fumarate. It functions in the pathway purine metabolism; AMP biosynthesis via de novo pathway; AMP from IMP: step 2/2. Its pathway is purine metabolism; IMP biosynthesis via de novo pathway; 5-amino-1-(5-phospho-D-ribosyl)imidazole-4-carboxamide from 5-amino-1-(5-phospho-D-ribosyl)imidazole-4-carboxylate: step 2/2. The sequence is that of Adenylosuccinate lyase (ade8) from Schizosaccharomyces pombe (strain 972 / ATCC 24843) (Fission yeast).